A 329-amino-acid polypeptide reads, in one-letter code: Quinone oxidoreductase (329 aa).

Alanine 2 carries the N-acetylalanine modification. Position 23 is an N6-acetyllysine (lysine 23). Residues tyrosine 53, 158-161, glycine 181, histidine 200, asparagine 229, 246-249, and 269-271 each bind NADP(+); these read SGGV, VGSR, and VAL. At serine 248 the chain carries Phosphoserine.

It belongs to the zinc-containing alcohol dehydrogenase family. Quinone oxidoreductase subfamily. Homotetramer.

It localises to the cytoplasm. The enzyme catalyses 2 a quinone + NADPH + H(+) = 2 a 1,4-benzosemiquinone + NADP(+). In terms of biological role, does not have alcohol dehydrogenase activity. Binds NADP and acts through a one-electron transfer process. Orthoquinones, such as 1,2-naphthoquinone or 9,10-phenanthrenequinone, are the best substrates (in vitro). May act in the detoxification of xenobiotics. Interacts with (AU)-rich elements (ARE) in the 3'-UTR of target mRNA species and enhances their stability. NADPH binding interferes with mRNA binding. This is Quinone oxidoreductase (CRYZ) from Sus scrofa (Pig).